The primary structure comprises 643 residues: Aspartic protease 3 (643 aa).

The signal sequence occupies residues 1–31 (MEGRTTAGRATPAGFWLFSCCLASVLWSANA). Low complexity predominate over residues 87–99 (APEVSGAAGASAS). The tract at residues 87 to 116 (APEVSGAAGASASKTSEKPIRPYHTGPSSR) is disordered. In terms of domain architecture, Peptidase A1 spans 281–600 (YVGVIGIGTP…GTRPSLVGIA (320 aa)). Residues D299 and D490 contribute to the active site.

Belongs to the peptidase A1 family.

Its subcellular location is the endomembrane system. Inhibited by 49c, a hydroxyethylamine scaffold-based compound. In terms of biological role, required for the processing-mediated maturation of a subset of microneme proteins, such as MIC6, and rhoptry proteins, such as ROP1. By regulating microneme and rhoptry processing, plays an essential role in the lysis of the host cell membrane during egress and in rhoptry content discharge, which is required for invasion of host cells. The sequence is that of Aspartic protease 3 from Toxoplasma gondii.